A 432-amino-acid polypeptide reads, in one-letter code: RNA binding protein fox-1 homolog 2 (432 aa).

The span at 1-21 (MAEGGQAQQQPPQLGPGAAAR) shows a compositional bias: low complexity. The interval 1–169 (MAEGGQAQQQ…STPKRLHVSN (169 aa)) is disordered. Polar residues-rich tracts occupy residues 60–69 (QGNQEPTTTP) and 101–121 (YAGQ…PHGE). A compositionally biased stretch (low complexity) spans 122-159 (QSSNSPSNQNGSLTQTEGGAQTDGQQSQTQSSENSESK). The RRM domain maps to 163-239 (KRLHVSNIPF…RKIEVNNATA (77 aa)). An Omega-N-methylarginine modification is found at Arg323. Residues Arg339 and Arg371 each carry the asymmetric dimethylarginine modification. Asymmetric dimethylarginine; alternate is present on residues Arg423 and Arg428. 2 positions are modified to omega-N-methylarginine; alternate: Arg423 and Arg428.

As to quaternary structure, interacts with ER-alpha N-terminal activation domain. Interacts with RBPMS; the interaction allows cooperative assembly of stable cell-specific alternative splicing regulatory complexes.

Its subcellular location is the nucleus. It is found in the cytoplasm. In terms of biological role, RNA-binding protein that regulates alternative splicing events by binding to 5'-UGCAUGU-3' elements. Prevents binding of U2AF2 to the 3'-splice site. Regulates alternative splicing of tissue-specific exons and of differentially spliced exons during erythropoiesis. Seems to act as a coregulatory factor of ER-alpha. Together with RNA binding proteins RBPMS and MBNL1/2, activates vascular smooth muscle cells alternative splicing events. In Rattus norvegicus (Rat), this protein is RNA binding protein fox-1 homolog 2 (Rbfox2).